Here is a 573-residue protein sequence, read N- to C-terminus: Sulfite reductase [NADPH] hemoprotein beta-component (573 aa).

Positions 438, 444, 483, and 487 each coordinate [4Fe-4S] cluster. Siroheme is bound at residue Cys487.

It belongs to the nitrite and sulfite reductase 4Fe-4S domain family. As to quaternary structure, alpha(8)-beta(8). The alpha component is a flavoprotein, the beta component is a hemoprotein. Siroheme serves as cofactor. The cofactor is [4Fe-4S] cluster.

It catalyses the reaction hydrogen sulfide + 3 NADP(+) + 3 H2O = sulfite + 3 NADPH + 4 H(+). It participates in sulfur metabolism; hydrogen sulfide biosynthesis; hydrogen sulfide from sulfite (NADPH route): step 1/1. Component of the sulfite reductase complex that catalyzes the 6-electron reduction of sulfite to sulfide. This is one of several activities required for the biosynthesis of L-cysteine from sulfate. The protein is Sulfite reductase [NADPH] hemoprotein beta-component of Nitrosomonas eutropha (strain DSM 101675 / C91 / Nm57).